Reading from the N-terminus, the 68-residue chain is Small ribosomal subunit protein bS21 (68 aa).

Positions 39–68 (PPSVKRVRKKQESERRHRKERAMRRRMMEE) are disordered. A compositionally biased stretch (basic residues) spans 54-68 (RHRKERAMRRRMMEE).

Belongs to the bacterial ribosomal protein bS21 family.

The chain is Small ribosomal subunit protein bS21 from Orientia tsutsugamushi (strain Ikeda) (Rickettsia tsutsugamushi).